Here is a 78-residue protein sequence, read N- to C-terminus: MSEVEKKVIDLVVDKLNVEASEVTREASFSNDLGADSLDTVELMMNFEKEFNMSIPDDQAQEIKTVGDAIDYIEKNLK.

The Carrier domain maps to 1-77 (MSEVEKKVID…DAIDYIEKNL (77 aa)). At S37 the chain carries O-(pantetheine 4'-phosphoryl)serine.

It belongs to the acyl carrier protein (ACP) family. In terms of processing, 4'-phosphopantetheine is transferred from CoA to a specific serine of apo-ACP by AcpS. This modification is essential for activity because fatty acids are bound in thioester linkage to the sulfhydryl of the prosthetic group.

It is found in the cytoplasm. The protein operates within lipid metabolism; fatty acid biosynthesis. Its function is as follows. Carrier of the growing fatty acid chain in fatty acid biosynthesis. This is Acyl carrier protein from Porphyromonas gingivalis (strain ATCC 33277 / DSM 20709 / CIP 103683 / JCM 12257 / NCTC 11834 / 2561).